Consider the following 970-residue polypeptide: Probable histidine kinase 6 (970 aa).

The Cytoplasmic segment spans residues 1-12; sequence MGKPEARSGWRN. A helical transmembrane segment spans residues 13 to 33; that stretch reads AAAAAWVLVAVACAAYMHWHL. Over 34 to 306 the chain is Extracellular; it reads RRETMDRAEE…YRQKPPLPWS (273 aa). The region spanning 82–294 is the CHASE domain; it reads FPSAIDQDTF…GDPFRAHEMR (213 aa). A helical membrane pass occupies residues 307 to 327; the sequence is AITNPLGTFVIWMLVGYIICA. Residues 328–970 lie on the Cytoplasmic side of the membrane; it reads AWSRYDKVSE…LVVGTKESAV (643 aa). Residues 362–651 form the Histidine kinase domain; sequence TVSHEIRTPM…TFTFSAVLKR (290 aa). Position 365 is a phosphohistidine; by autocatalysis (histidine 365). 2 Response regulatory domains span residues 676–802 and 827–962; these read KAIL…QQLL and NILI…SRLV. 4-aspartylphosphate is present on aspartate 877.

In terms of processing, activation probably requires a transfer of a phosphate group between a His in the transmitter domain and an Asp of the receiver domain. As to expression, highly expressed in spikelets and at lower levels in roots, young leaves, mature leaves and stems.

The protein localises to the cell membrane. The enzyme catalyses ATP + protein L-histidine = ADP + protein N-phospho-L-histidine.. Its function is as follows. Cytokinin receptor related to bacterial two-component regulators. Functions as a histidine kinase and transmits the stress signal to a downstream MAPK cascade. The sequence is that of Probable histidine kinase 6 from Oryza sativa subsp. japonica (Rice).